The chain runs to 427 residues: 3-phosphoshikimate 1-carboxyvinyltransferase (427 aa).

Residues lysine 23, serine 24, and arginine 28 each contribute to the 3-phosphoshikimate site. Residue lysine 23 participates in phosphoenolpyruvate binding. Phosphoenolpyruvate is bound by residues glycine 97 and arginine 125. 3-phosphoshikimate is bound by residues serine 170, serine 171, glutamine 172, serine 198, aspartate 314, asparagine 337, and lysine 341. Position 172 (glutamine 172) interacts with phosphoenolpyruvate. Aspartate 314 (proton acceptor) is an active-site residue. Phosphoenolpyruvate-binding residues include arginine 345, arginine 387, and lysine 412.

It belongs to the EPSP synthase family. As to quaternary structure, monomer.

It is found in the cytoplasm. The catalysed reaction is 3-phosphoshikimate + phosphoenolpyruvate = 5-O-(1-carboxyvinyl)-3-phosphoshikimate + phosphate. Its pathway is metabolic intermediate biosynthesis; chorismate biosynthesis; chorismate from D-erythrose 4-phosphate and phosphoenolpyruvate: step 6/7. Its function is as follows. Catalyzes the transfer of the enolpyruvyl moiety of phosphoenolpyruvate (PEP) to the 5-hydroxyl of shikimate-3-phosphate (S3P) to produce enolpyruvyl shikimate-3-phosphate and inorganic phosphate. The sequence is that of 3-phosphoshikimate 1-carboxyvinyltransferase from Buchnera aphidicola subsp. Acyrthosiphon pisum (strain 5A).